The sequence spans 235 residues: MKFIFYLSVLTGTFLFADSSVQKEDPAPYLVYLKSHFNPCVGVLIKPSWVLAPAHCYLPNLEVMLGNFKSRVRDGTEQTINPIQIVRYWNYSDSAPQDDLMLIKLAKPAMLNPKVQPLPLATTNVRPGTVCLLSGLDWSQENSGRHPDLRQNLEAPVMSDKECQKTEQGKSHRNSLCVKFVKVFSRIFGEVAVATVICKDKLQGIEVGHFMGGDVGIYTNVYKYVSWIENTAKDK.

Positions 1-19 are cleaved as a signal peptide; that stretch reads MKFIFYLSVLTGTFLFADS. In terms of domain architecture, Peptidase S1 spans 20-233; sequence SVQKEDPAPY…YVSWIENTAK (214 aa). Disulfide bonds link C40–C56, C131–C198, and C163–C177.

Belongs to the peptidase S1 family.

It is found in the cytoplasmic vesicle. The protein resides in the secretory vesicle. Its subcellular location is the acrosome. It localises to the secreted. In terms of biological role, plays a role in male fertility. May have a role in sperm migration or binding to zona-intact eggs. Involved in the activation of the proacrosin/acrosin system. The sequence is that of Probable inactive serine protease 37 from Macaca fascicularis (Crab-eating macaque).